Here is a 330-residue protein sequence, read N- to C-terminus: Daunorubicin/doxorubicin resistance ATP-binding protein DrrA (330 aa).

In terms of domain architecture, ABC transporter spans 9–239; it reads IETSGLVKVY…LGSNVLRLRL (231 aa). ATP is bound at residue 41–48; it reads GPNGAGKS.

This sequence belongs to the ABC transporter superfamily. Drug exporter-1 (DrugE1) (TC 3.A.1.105) family. As to quaternary structure, the complex is composed of two ATP-binding proteins (DrrA) and two transmembrane proteins (DrrB).

The protein localises to the cell membrane. The catalysed reaction is daunorubicin(in) + ATP + H2O = daunorubicin(out) + ADP + phosphate + H(+). Its function is as follows. Part of the ABC transporter complex DrrAB involved in daunorubicin and doxorubicin resistance. Responsible for energy coupling to the transport system. Binds ATP or GTP. The protein is Daunorubicin/doxorubicin resistance ATP-binding protein DrrA (drrA) of Streptomyces peucetius.